The chain runs to 264 residues: Thymidylate synthase (264 aa).

R21 contributes to the dUMP binding site. H51 is a binding site for (6R)-5,10-methylene-5,6,7,8-tetrahydrofolate. Position 126–127 (126–127 (RR)) interacts with dUMP. Catalysis depends on C146, which acts as the Nucleophile. DUMP is bound by residues 166-169 (RSCD), N177, and 207-209 (HLY). Residue D169 coordinates (6R)-5,10-methylene-5,6,7,8-tetrahydrofolate. A263 provides a ligand contact to (6R)-5,10-methylene-5,6,7,8-tetrahydrofolate.

Belongs to the thymidylate synthase family. Bacterial-type ThyA subfamily. In terms of assembly, homodimer.

It is found in the cytoplasm. It catalyses the reaction dUMP + (6R)-5,10-methylene-5,6,7,8-tetrahydrofolate = 7,8-dihydrofolate + dTMP. Its pathway is pyrimidine metabolism; dTTP biosynthesis. Catalyzes the reductive methylation of 2'-deoxyuridine-5'-monophosphate (dUMP) to 2'-deoxythymidine-5'-monophosphate (dTMP) while utilizing 5,10-methylenetetrahydrofolate (mTHF) as the methyl donor and reductant in the reaction, yielding dihydrofolate (DHF) as a by-product. This enzymatic reaction provides an intracellular de novo source of dTMP, an essential precursor for DNA biosynthesis. In Shewanella denitrificans (strain OS217 / ATCC BAA-1090 / DSM 15013), this protein is Thymidylate synthase.